We begin with the raw amino-acid sequence, 550 residues long: Chaperonin GroEL (550 aa).

ATP is bound by residues 30 to 33 (TLGP), Lys51, 87 to 91 (DGTTT), Gly415, and Asp495.

Belongs to the chaperonin (HSP60) family. In terms of assembly, forms a cylinder of 14 subunits composed of two heptameric rings stacked back-to-back. Interacts with the co-chaperonin GroES.

It localises to the cytoplasm. The catalysed reaction is ATP + H2O + a folded polypeptide = ADP + phosphate + an unfolded polypeptide.. In terms of biological role, together with its co-chaperonin GroES, plays an essential role in assisting protein folding. The GroEL-GroES system forms a nano-cage that allows encapsulation of the non-native substrate proteins and provides a physical environment optimized to promote and accelerate protein folding. The polypeptide is Chaperonin GroEL (Dechloromonas aromatica (strain RCB)).